Reading from the N-terminus, the 318-residue chain is 2-keto-3-deoxygluconate permease (318 aa).

10 helical membrane-spanning segments follow: residues 10–30, 42–62, 82–102, 109–129, 139–159, 163–183, 201–221, 224–244, 257–277, and 288–308; these read LPGG…TLWP, GLIS…GATI, IAVA…GGIP, LSVL…YAAL, AGAV…LILG, LATF…LGFA, TLVP…TIVH, ASGV…LLLA, VAAS…AGMA, and TALV…LTAL.

Belongs to the KdgT transporter family.

The protein resides in the cell inner membrane. It carries out the reaction 2-dehydro-3-deoxy-D-gluconate(in) + H(+)(in) = 2-dehydro-3-deoxy-D-gluconate(out) + H(+)(out). In terms of biological role, catalyzes the proton-dependent uptake of 2-keto-3-deoxygluconate (KDG) into the cell. This is 2-keto-3-deoxygluconate permease from Xanthomonas oryzae pv. oryzae (strain MAFF 311018).